We begin with the raw amino-acid sequence, 399 residues long: Accessory Sec system protein translocase subunit SecY2 (399 aa).

The next 10 helical transmembrane spans lie at 14–34 (ILFTCFILIVYIFGSNISIVG), 60–80 (LNVFSLGLGPWLTSLVIIMLL), 102–122 (IITIVFAIFQSYFVISTYIHN), 128–148 (SNIILLMLILVAGTMLLVWLA), 152–172 (ITYGICGPMPIVLTSLIKSLF), 184–204 (VLLLILVIVTLVIALLILLFI), 238–258 (ISIMISLSVYVLLNNMINLIA), 272–292 (FANPIGIMFYIVLQIVLSYLL), 335–355 (WTGAILVALILAVPLYSTLLV), and 362–382 (IYFSMQLIILVYISINIGETI).

Belongs to the SecY/SEC61-alpha family. SecY2 subfamily. In terms of assembly, component of the accessory SecA2/SecY2 protein translocase complex required to export cell wall proteins. May form heterotrimers with SecE and SecG subunits.

It localises to the cell membrane. Its function is as follows. Part of the accessory SecA2/SecY2 system specifically required for export of possible cell wall proteins. The central subunit of a protein translocation channel. This is Accessory Sec system protein translocase subunit SecY2 from Staphylococcus haemolyticus (strain JCSC1435).